Consider the following 358-residue polypeptide: Methionine aminopeptidase 2 (358 aa).

Histidine 109 serves as a coordination point for substrate. A divalent metal cation contacts are provided by aspartate 130, aspartate 141, and histidine 210. Histidine 218 contacts substrate. Residues glutamate 243 and glutamate 339 each coordinate a divalent metal cation.

It belongs to the peptidase M24A family. Methionine aminopeptidase eukaryotic type 2 subfamily. Requires Co(2+) as cofactor. The cofactor is Zn(2+). Mn(2+) is required as a cofactor. It depends on Fe(2+) as a cofactor.

The protein localises to the cytoplasm. It carries out the reaction Release of N-terminal amino acids, preferentially methionine, from peptides and arylamides.. Its activity is regulated as follows. Irreversibly inhibited by the fungal metabolite fumagillin and the fumagillin analog TNP470, antiangiogenic drugs. In terms of biological role, cotranslationally removes the N-terminal methionine from nascent proteins. The N-terminal methionine is often cleaved when the second residue in the primary sequence is small and uncharged (Met-Ala-, Cys, Gly, Pro, Ser, Thr, or Val). This Encephalitozoon hellem (strain ATCC 50504) (Microsporidian parasite) protein is Methionine aminopeptidase 2.